The chain runs to 132 residues: Interleukin-4 (132 aa).

Residues 1–24 form the signal peptide; the sequence is MGLTSQLIPTLVCLLALTSTFVHG. 6 N-linked (GlcNAc...) asparagine glycosylation sites follow: asparagine 28, asparagine 45, asparagine 62, asparagine 83, asparagine 95, and asparagine 101. Disulfide bonds link cysteine 48–cysteine 84 and cysteine 70–cysteine 104.

Belongs to the IL-4/IL-13 family.

Its subcellular location is the secreted. Participates in at least several B-cell activation processes as well as of other cell types. It is a costimulator of DNA-synthesis. It induces the expression of class II MHC molecules on resting B-cells. It enhances both secretion and cell surface expression of IgE and IgG1. It also regulates the expression of the low affinity Fc receptor for IgE (CD23) on both lymphocytes and monocytes. Positively regulates IL31RA expression in macrophages. Stimulates autophagy in dendritic cells by interfering with mTORC1 signaling and through the induction of RUFY4. The polypeptide is Interleukin-4 (IL4) (Canis lupus familiaris (Dog)).